The chain runs to 406 residues: tRNA-specific 2-thiouridylase MnmA (406 aa).

ATP is bound by residues 42–49 (GLSGGVDS) and L68. The active-site Nucleophile is the C129. An intrachain disulfide couples C129 to C237. G154 is an ATP binding site. The tract at residues 187 to 189 (KDQ) is interaction with tRNA. Residue C237 is the Cysteine persulfide intermediate of the active site. Residues 342-343 (RY) are interaction with tRNA.

This sequence belongs to the MnmA/TRMU family.

The protein localises to the cytoplasm. It carries out the reaction S-sulfanyl-L-cysteinyl-[protein] + uridine(34) in tRNA + AH2 + ATP = 2-thiouridine(34) in tRNA + L-cysteinyl-[protein] + A + AMP + diphosphate + H(+). Its function is as follows. Catalyzes the 2-thiolation of uridine at the wobble position (U34) of tRNA, leading to the formation of s(2)U34. This is tRNA-specific 2-thiouridylase MnmA from Prochlorococcus marinus (strain MIT 9211).